Here is a 141-residue protein sequence, read N- to C-terminus: Hemoglobin subunit alpha-2 (141 aa).

At S1 the chain carries N-acetylserine. In terms of domain architecture, Globin spans 1-141 (SLSTKDKETV…LARALSEKYR (141 aa)). Position 59 (H59) interacts with O2. Heme b is bound at residue H88.

Belongs to the globin family. As to quaternary structure, hb2 is a heterotetramer of two alpha-2 chains and two beta chains. As to expression, red blood cells.

Involved in oxygen transport from gills to the various peripheral tissues. This is Hemoglobin subunit alpha-2 (hba2) from Notothenia angustata (Rockcod).